Reading from the N-terminus, the 348-residue chain is Protein RecA (348 aa).

Residue 66-73 (GPESSGKT) participates in ATP binding.

The protein belongs to the RecA family.

Its subcellular location is the cytoplasm. Functionally, can catalyze the hydrolysis of ATP in the presence of single-stranded DNA, the ATP-dependent uptake of single-stranded DNA by duplex DNA, and the ATP-dependent hybridization of homologous single-stranded DNAs. It interacts with LexA causing its activation and leading to its autocatalytic cleavage. This Neisseria meningitidis serogroup C / serotype 2a (strain ATCC 700532 / DSM 15464 / FAM18) protein is Protein RecA.